Consider the following 708-residue polypeptide: Putative adhesion G protein-coupled receptor F2P (708 aa).

Residues 1-451 (MGLTAYGNRR…ESLILTYITY (451 aa)) lie on the Extracellular side of the membrane. N-linked (GlcNAc...) asparagine glycans are attached at residues asparagine 21, asparagine 220, asparagine 252, asparagine 260, asparagine 305, asparagine 313, and asparagine 358. The GAIN-B domain maps to 293–442 (MGTTISGDNI…SILMSPHILE (150 aa)). Disulfide bonds link cysteine 394-cysteine 421 and cysteine 409-cysteine 423. The interval 394 to 442 (CVGWHSVENRWDQQACKMIQENSQQAVCKCRPSKLFTSFSILMSPHILE) is GPS. The chain crosses the membrane as a helical span at residues 452–472 (VGLGISICSLILCLSIEVLVW). Residues 473–487 (SQVTKTEITYLRHVC) are Cytoplasmic-facing. A helical transmembrane segment spans residues 488–508 (IVNIAATLLMADVWFIVASFL). Residues 509 to 530 (SGPITHHKGCVAATFFVHFFYL) are Extracellular-facing. The chain crosses the membrane as a helical span at residues 531–551 (SVFFWMLAKALLILYGIMIVF). Topologically, residues 552–557 (HTLPKS) are cytoplasmic. A helical membrane pass occupies residues 558–578 (VLVASLFSVGYGCPLAIAAIT). The Extracellular segment spans residues 579–606 (VAATEPGKGYLRPEICWLNWDMTKALLA). A helical transmembrane segment spans residues 607–627 (FVIPALAIVVVNLITVTLVIV). Over 628–650 (KTQRAAIGNSMFQEVRAIVRISK) the chain is Cytoplasmic. A helical transmembrane segment spans residues 651 to 671 (NIAILTPLLGLTWGFGVATVI). Residues 672 to 674 (DDR) lie on the Extracellular side of the membrane. A helical membrane pass occupies residues 675-695 (SLAFHIIFSLLNAFQVSPDAS). Residues 696 to 708 (DQVQSERIHEDVL) are Cytoplasmic-facing.

The protein belongs to the G-protein coupled receptor 2 family. Adhesion G-protein coupled receptor (ADGR) subfamily. In terms of tissue distribution, high expression in kidney. Up-regulated in lung adenocarcinomas and prostate cancers.

The protein localises to the membrane. Orphan receptor. The sequence is that of Putative adhesion G protein-coupled receptor F2P from Homo sapiens (Human).